We begin with the raw amino-acid sequence, 820 residues long: Chitinase A (820 aa).

Positions 1-21 (MKLNKITSYIGFALLSGGALA) are cleaved as a signal peptide. In terms of domain architecture, GH18 spans 158 to 588 (RVTGAYFVEW…NAMYDGLTAG (431 aa)). The active-site Proton donor is the glutamate 313.

This sequence belongs to the glycosyl hydrolase 18 family. Chitinase class II subfamily.

It catalyses the reaction Random endo-hydrolysis of N-acetyl-beta-D-glucosaminide (1-&gt;4)-beta-linkages in chitin and chitodextrins.. Stimulated by magnesium ions; inhibited by N-bromosuccinimide and 2-hydroxy-5-nitrobenzyl bromide. The polypeptide is Chitinase A (chiA) (Pseudoalteromonas piscicida).